We begin with the raw amino-acid sequence, 319 residues long: MEPILAPNPNRFVIFPIQYHDIWNMYKKAEASFWTVEEVDISKDINDWNKLTPDEKYFIKHVLAFFAASDGIVNENLAERFCTEVQITEARCFYGFQMAIENIHSEMYSLLIDTYVKDSNEKNYLFNAIETMPCVKKKADWAQKWIHDSAGYGERLIAFAAVEGIFFSGSFASIFWLKKRGLMPGLTFSNELISRDEGLHCDFACLMFKHLLHPPSEETVRFIITNAVSIEQEFLTVALPVKLIGMNCEMMKTYIEFVADRLISELGFKKIYNVTNPFDFMENISLEGKTNFFEKRVGEYQKMGVMSQEDNHFSLDVDF.

The tract at residues 313–319 is interaction with R1; sequence FSLDVDF.

It belongs to the ribonucleoside diphosphate reductase small chain family. Interacts with RNR1/OPG080 subunit. Can interact with host RNR1 supunit. Fe cation serves as cofactor.

The enzyme catalyses a 2'-deoxyribonucleoside 5'-diphosphate + [thioredoxin]-disulfide + H2O = a ribonucleoside 5'-diphosphate + [thioredoxin]-dithiol. In terms of biological role, ribonucleoside-diphosphate reductase holoenzyme provides the precursors necessary for viral DNA synthesis. Allows virus growth in non-dividing cells. Catalyzes the biosynthesis of deoxyribonucleotides from the corresponding ribonucleotides. The protein is Ribonucleoside-diphosphate reductase small chain (OPG048) of Cynomys gunnisoni (Gunnison's prairie dog).